The chain runs to 72 residues: MAKDDVIQMQGEVLENLPNATFRVKLENGHIVLGHISGKMRMNYIRILPGDKVTVELTPYDLSRARIVFRTK.

An S1-like domain is found at 1-72 (MAKDDVIQMQ…SRARIVFRTK (72 aa)).

It belongs to the IF-1 family. In terms of assembly, component of the 30S ribosomal translation pre-initiation complex which assembles on the 30S ribosome in the order IF-2 and IF-3, IF-1 and N-formylmethionyl-tRNA(fMet); mRNA recruitment can occur at any time during PIC assembly.

The protein resides in the cytoplasm. One of the essential components for the initiation of protein synthesis. Stabilizes the binding of IF-2 and IF-3 on the 30S subunit to which N-formylmethionyl-tRNA(fMet) subsequently binds. Helps modulate mRNA selection, yielding the 30S pre-initiation complex (PIC). Upon addition of the 50S ribosomal subunit IF-1, IF-2 and IF-3 are released leaving the mature 70S translation initiation complex. In Cupriavidus metallidurans (strain ATCC 43123 / DSM 2839 / NBRC 102507 / CH34) (Ralstonia metallidurans), this protein is Translation initiation factor IF-1 2.